The primary structure comprises 787 residues: Alpha-glucosidase 2 (787 aa).

Catalysis depends on residues aspartate 407 and glutamate 410. Aspartate 484 (proton donor) is an active-site residue.

It belongs to the glycosyl hydrolase 31 family. As to quaternary structure, homohexamer.

The enzyme catalyses Hydrolysis of terminal, non-reducing (1-&gt;4)-linked alpha-D-glucose residues with release of alpha-D-glucose.. The chain is Alpha-glucosidase 2 from Bacillus thermoamyloliquefaciens.